The following is a 244-amino-acid chain: 5-oxoprolinase subunit A (244 aa).

Belongs to the LamB/PxpA family. Forms a complex composed of PxpA, PxpB and PxpC.

The enzyme catalyses 5-oxo-L-proline + ATP + 2 H2O = L-glutamate + ADP + phosphate + H(+). Catalyzes the cleavage of 5-oxoproline to form L-glutamate coupled to the hydrolysis of ATP to ADP and inorganic phosphate. The sequence is that of 5-oxoprolinase subunit A from Salmonella typhimurium (strain LT2 / SGSC1412 / ATCC 700720).